We begin with the raw amino-acid sequence, 290 residues long: Alpha-1,2-colitosyltransferase (290 aa).

It belongs to the glycosyltransferase 11 family. It depends on Does not require a metal cofactor. as a cofactor.

The enzyme catalyses GDP-beta-L-colitose + beta-D-galactosyl-(1-&gt;3)-N-acetyl-D-glucosamine = alpha-L-colitosyl-(1-&gt;2)-beta-D-galactosyl-(1-&gt;3)-N-acetyl-D-glucosamine + GDP + H(+). The protein operates within bacterial outer membrane biogenesis; LPS O-antigen biosynthesis. Addition of metal ions dramatically decreases the activity to 0-40%. Its function is as follows. Involved in the biosynthesis of the lipopolysaccharide (LPS) O-antigen region. Catalyzes the transfer of colitose from GDP-colitose to the galactose residue of beta-Gal-(1-&gt;3)-GlcNAc (lacto-N-biose) via an alpha1,2-linkage. Is specific for beta-Gal-(1-&gt;3)-GlcNAc, but can use GDP-L-fucose as the sugar donor with almost the same efficiency as GDP-L-colitose. In Escherichia coli, this protein is Alpha-1,2-colitosyltransferase.